The sequence spans 20 residues: FLPLLLAGLPKLLCLFFKKC.

Cysteines 14 and 20 form a disulfide.

As to expression, expressed by the skin glands.

Its subcellular location is the secreted. In terms of biological role, antimicrobial peptide. Has low activity against the Gram-positive bacterium S.aureus and the Gram-negative bacterium E.coli (MIC&lt;15 uM). Has a strong hemolytic activity. The sequence is that of Brevinin-1DYc from Rana dybowskii (Dybovsky's frog).